Here is a 206-residue protein sequence, read N- to C-terminus: Small ribosomal subunit protein uS4 (206 aa).

The region spanning 96-156 (TRLDNVVYRM…EKSRTQARIK (61 aa)) is the S4 RNA-binding domain.

This sequence belongs to the universal ribosomal protein uS4 family. Part of the 30S ribosomal subunit. Contacts protein S5. The interaction surface between S4 and S5 is involved in control of translational fidelity.

Functionally, one of the primary rRNA binding proteins, it binds directly to 16S rRNA where it nucleates assembly of the body of the 30S subunit. In terms of biological role, with S5 and S12 plays an important role in translational accuracy. The chain is Small ribosomal subunit protein uS4 from Shewanella sp. (strain ANA-3).